The sequence spans 118 residues: Basic phospholipase A2 2 (118 aa).

Cystine bridges form between Cys-11–Cys-71, Cys-27–Cys-117, Cys-29–Cys-45, Cys-44–Cys-98, Cys-51–Cys-91, Cys-60–Cys-84, and Cys-78–Cys-89. Ca(2+) contacts are provided by Tyr-28, Gly-30, and Gly-32. The active site involves His-48. Asp-49 provides a ligand contact to Ca(2+). Residue Asp-92 is part of the active site.

This sequence belongs to the phospholipase A2 family. Group I subfamily. D49 sub-subfamily. It depends on Ca(2+) as a cofactor. As to expression, expressed by the venom gland.

Its subcellular location is the secreted. The enzyme catalyses a 1,2-diacyl-sn-glycero-3-phosphocholine + H2O = a 1-acyl-sn-glycero-3-phosphocholine + a fatty acid + H(+). In terms of biological role, snake venom phospholipase A2 (PLA2) that inhibits neuromuscular transmission by blocking acetylcholine release from the nerve termini. PLA2 catalyzes the calcium-dependent hydrolysis of the 2-acyl groups in 3-sn-phosphoglycerides. This Laticauda colubrina (Yellow-lipped sea krait) protein is Basic phospholipase A2 2.